The sequence spans 173 residues: Plasmolipin (173 aa).

At 1–34 (MADFPGKVSTQTSSQEPQRSFAISSSVDMGFIKS) the chain is on the cytoplasmic side. The region spanning 31 to 160 (FIKSIPGILL…SSYFAYLGWR (130 aa)) is the MARVEL domain. Residues 35 to 55 (IPGILLIAEIVVGLLVWTLIA) form a helical membrane-spanning segment. Residues 56–67 (STPHYLIPALGW) lie on the Extracellular side of the membrane. The chain crosses the membrane as a helical span at residues 68-88 (VLFVSITLWLLSIALLVILLL). The Cytoplasmic segment spans residues 89-98 (SLHQRLPSVP). The chain crosses the membrane as a helical span at residues 99 to 119 (WPLVLLVFYSVAALLYLTAFL). The Extracellular segment spans residues 120–138 (ANAATVPGGYYQGHLGASA). The chain crosses the membrane as a helical span at residues 139–159 (FFGIVETLLYTASSYFAYLGW). Residues 160–173 (RGEGQNAAGSTVPV) are Cytoplasmic-facing.

The protein belongs to the MAL family. As to quaternary structure, forms oligomers. In terms of tissue distribution, expressed in the posterior midgut.

It localises to the cell membrane. The protein localises to the myelin membrane. The protein resides in the apical cell membrane. It is found in the recycling endosome membrane. Its subcellular location is the vesicle. Main component of the myelin sheath that plays an important role in myelin membrane biogenesis and myelination. Plays an essential function in apical endocytosis. Plays an important role by activating the Notch signaling pathway, which is essential for cell differentiation and results in correct patterning of the intestinal epithelium, particularly of the posterior gut absorptive cells. This is Plasmolipin (pllp) from Danio rerio (Zebrafish).